A 502-amino-acid chain; its full sequence is Maturase K (502 aa).

It belongs to the intron maturase 2 family. MatK subfamily.

It localises to the plastid. The protein resides in the chloroplast. Its function is as follows. Usually encoded in the trnK tRNA gene intron. Probably assists in splicing its own and other chloroplast group II introns. The chain is Maturase K from Spiraea cantoniensis (Reeve's meadowsweet).